We begin with the raw amino-acid sequence, 505 residues long: MPRTYDEECSYIERITDVVYRIKKGFVPNMNVEGRFYVNTALEKLMFEELRNACRLDGIGGFLPAVRQIGNVAALPAIVNASIGLPDIHSGYGFAIGNIAAFDVSDPDAVVSPGGVGFDINCGVRLIRTNLSEKDVQPVKEQLAQSLFDHIPVGVGSKGIIPIGAQQFEECLEMGMDWTLREGYSWAEDKEHCEEYGRMLQADAAKVSPRAKKRGLPQLGTLGAGNHYGEVQVIDEIYDEYAASRMGIDRLGQVCIMIHCGSRGLGHQVATDSLVVMEKAMKRDNIIVNDRQLACARINSMEGQDYLKGMAAAANFAWVNRSCMTFCARQAFAKVFNTSPDDLDMHVIYDVSHNIAKIEEHLINGRPKQLCVHRKGSTRAFPPHHPLIPVDYQLTGQPVLIGGTMGTCSYVLTGTEQGMNETFATTCHGAGRALSRAKSRRNIDFQEVLNKMQAMGISIRVASPKLVMEEAPESYKNVTDVVNTCHEAGISKKSVKLRPIAVIKG.

The Mn(2+) site is built by Asp119, Cys122, His227, His259, and His353. 226–230 (NHYGE) is a binding site for GMP. GMP contacts are provided by residues 353-354 (HN), 402-405 (GGTM), Ser409, 428-431 (HGAG), and Lys504. His428 serves as the catalytic GMP-histidine intermediate.

This sequence belongs to the RtcB family. Catalytic component of the tRNA-splicing ligase complex. Mn(2+) is required as a cofactor.

The catalysed reaction is a 3'-end 3'-phospho-ribonucleotide-RNA + a 5'-end dephospho-ribonucleoside-RNA + GTP = a ribonucleotidyl-ribonucleotide-RNA + GMP + diphosphate. It catalyses the reaction a 3'-end 2',3'-cyclophospho-ribonucleotide-RNA + a 5'-end dephospho-ribonucleoside-RNA + GTP + H2O = a ribonucleotidyl-ribonucleotide-RNA + GMP + diphosphate + H(+). In terms of biological role, catalytic subunit of the tRNA-splicing ligase complex that acts by directly joining spliced tRNA halves to mature-sized tRNAs by incorporating the precursor-derived splice junction phosphate into the mature tRNA as a canonical 3',5'-phosphodiester. May act as an RNA ligase with broad substrate specificity, and may function toward other RNAs. The sequence is that of RNA-splicing ligase RtcB homolog from Brugia malayi (Filarial nematode worm).